Consider the following 107-residue polypeptide: Flagellar hook-basal body complex protein FliE (107 aa).

It belongs to the FliE family.

Its subcellular location is the bacterial flagellum basal body. The sequence is that of Flagellar hook-basal body complex protein FliE from Cupriavidus pinatubonensis (strain JMP 134 / LMG 1197) (Cupriavidus necator (strain JMP 134)).